The following is an 834-amino-acid chain: Glycerol-3-phosphate acyltransferase (834 aa).

Residues 309 to 314 carry the HXXXXD motif motif; that stretch reads CHRSHI.

Belongs to the GPAT/DAPAT family.

The protein localises to the cell inner membrane. It carries out the reaction sn-glycerol 3-phosphate + an acyl-CoA = a 1-acyl-sn-glycero-3-phosphate + CoA. The protein operates within phospholipid metabolism; CDP-diacylglycerol biosynthesis; CDP-diacylglycerol from sn-glycerol 3-phosphate: step 1/3. The polypeptide is Glycerol-3-phosphate acyltransferase (Pseudomonas paraeruginosa (strain DSM 24068 / PA7) (Pseudomonas aeruginosa (strain PA7))).